Reading from the N-terminus, the 349-residue chain is Cobalt-precorrin-5B C(1)-methyltransferase (349 aa).

The protein belongs to the CbiD family.

The enzyme catalyses Co-precorrin-5B + S-adenosyl-L-methionine = Co-precorrin-6A + S-adenosyl-L-homocysteine. Its pathway is cofactor biosynthesis; adenosylcobalamin biosynthesis; cob(II)yrinate a,c-diamide from sirohydrochlorin (anaerobic route): step 6/10. Its function is as follows. Catalyzes the methylation of C-1 in cobalt-precorrin-5B to form cobalt-precorrin-6A. The protein is Cobalt-precorrin-5B C(1)-methyltransferase of Saccharolobus islandicus (strain L.S.2.15 / Lassen #1) (Sulfolobus islandicus).